The primary structure comprises 828 residues: Neurotrophin receptor-interacting factor 1 (828 aa).

The KRAB 1 domain occupies 14–85 (VKFEDVSLTF…QREIPQDTLP (72 aa)). Residue lysine 15 forms a Glycyl lysine isopeptide (Lys-Gly) (interchain with G-Cter in ubiquitin) linkage. Positions 158–240 (RQKFRHFQYE…ALLENMTSVS (83 aa)) constitute an SCAN box domain. Positions 280–370 (VTFQDVAVDF…ESILEDGVKE (91 aa)) constitute a KRAB 2 domain. 3 disordered regions span residues 328–355 (RELT…RNGT), 377–490 (NQVG…DPIT), and 575–611 (QKGY…LSTS). The segment covering 345–355 (PNTNDLSRNGT) has biased composition (polar residues). Residues 384–394 (EKGHPQKKFSE) are compositionally biased toward basic and acidic residues. The segment covering 418–433 (KYVKVKQKGTGKRKGR) has biased composition (basic residues). Positions 458 to 478 (RSGSTPVTHGSSIKKQQQGSE) are enriched in polar residues. Basic residues predominate over residues 589-599 (SWKHIKPHQKG). A compositionally biased stretch (basic and acidic residues) spans 600–611 (SKGERVEELSTS). 5 C2H2-type zinc fingers span residues 684–706 (CRCS…KKIH), 712–734 (YMCM…LRIH), 740–762 (FECS…LRTH), 768–790 (YHCE…ERTH), and 796–818 (YVCI…QKTH).

This sequence belongs to the krueppel C2H2-type zinc-finger protein family. Interacts with NGFR/p75(NTR). Interacts (via KRAB 1 domain) with TRAF6. Interacts (when ubiquitinated at Lys-15) with SQSTM1/p62. Post-translationally, ubiquitinated by TRAF6 at Lys-15 through 'Lys-63'-linked polyubiquitination. 'Lys-63'-linked polyubiquitination occurs in response to NGFR/p75(NTR) cleavage by gamma-secretase and promotes binding with the ICD cleavage product of NGFR/p75(NTR), followed by translocation into the nucleus and subsequent apoptosis. In terms of tissue distribution, ubiquitously expressed at low level. Expressed at higher level in testis.

The protein resides in the cytoplasm. The protein localises to the nucleus. Transcription regulator involved in NGFR/p75(NTR)-mediated apoptosis. Essential component of the NGFR/p75(NTR) apoptotic pathway: upon ligand-binding and subsequent cleavage of NGFR/p75(NTR), binds to the intracellular domain (ICD) cleavage product of NGFR/p75(NTR), translocates to the nucleus and induces apoptosis, possibly by regulating expression of key regulators of apoptosis. Induces NGFR/p75(NTR)-mediated apoptosis in retina and sympathetic neurons. May also regulate expression of neuronal cholesterol biosynthesis genes. Probably acts as a transcription repressor: specifically binds to the 3'-end of zinc-finger coding genes and recruiting chromatin-modifying proteins such as SETDB1 and TRIM28/KAP1, leading to transcription repression. The sequence is that of Neurotrophin receptor-interacting factor 1 (Nrif1) from Mus musculus (Mouse).